A 447-amino-acid polypeptide reads, in one-letter code: Polyamine export protein (447 aa).

Over 1-4 (MLNS) the chain is Cytoplasmic. The CNNM transmembrane domain occupies 1-197 (MLNSILVILC…ALAGVLRKQE (197 aa)). A helical membrane pass occupies residues 5 to 25 (ILVILCLIAVSAFFSMSEISL). The Periplasmic segment spans residues 26 to 54 (AASRKIKLKLLADEGNINAQRVLNMQENP). Residues 55–75 (GMFFTVVQIGLNAVAILGGIV) traverse the membrane as a helical segment. The Cytoplasmic segment spans residues 76–99 (GDAAFSPAFHSLFSRYMSAELSEQ). Residues 100-120 (LSFILSFSLVTGMFILFADLT) form a helical membrane-spanning segment. At 121-141 (PKRIGMIAPEAVALRIINPMR) the chain is on the periplasmic side. A helical membrane pass occupies residues 142-162 (FCLYVCTPLVWFFNGLANIIF). Over 163–447 (RIFKLPMVRK…DAKDKEESVA (285 aa)) the chain is Cytoplasmic. 2 consecutive CBS domains span residues 216-275 (MTPR…NQSL) and 282-343 (QIRN…GLEE).

This sequence belongs to the UPF0053 family. PaeA subfamily.

It localises to the cell inner membrane. In terms of biological role, involved in cadaverine and putrescine tolerance in stationary phase. May facilitate the efflux of both cadaverine and putrescine from the cytoplasm, reducing potentially toxic levels under certain stress conditions. The protein is Polyamine export protein of Escherichia coli O157:H7.